A 662-amino-acid polypeptide reads, in one-letter code: Probable conjugal transfer protein TrbE part 2 (662 aa).

Residue 307-314 coordinates ATP; the sequence is GPTGSGKS.

This sequence belongs to the TrbE/VirB4 family.

The chain is Probable conjugal transfer protein TrbE part 2 (trbEB) from Sinorhizobium fredii (strain NBRC 101917 / NGR234).